A 248-amino-acid polypeptide reads, in one-letter code: tRNA N(3)-methylcytidine methyltransferase trm141 (248 aa).

6 residues coordinate S-adenosyl-L-methionine: Trp-23, Tyr-27, Gly-63, Asp-86, Asp-112, and Ile-133.

The protein belongs to the methyltransferase superfamily. METL family.

The protein localises to the cytoplasm. Its subcellular location is the nucleus. It carries out the reaction cytidine(32) in tRNA(Ser) + S-adenosyl-L-methionine = N(3)-methylcytidine(32) in tRNA(Ser) + S-adenosyl-L-homocysteine + H(+). Functionally, S-adenosyl-L-methionine-dependent methyltransferase that mediates N(3)-methylcytidine modification of residue 32 of the tRNA anticodon loop of tRNA(Ser). N(3)-methylcytidine methylation by trm141 requires the formation of N(6)-dimethylallyladenosine(37) (i6A37) by tit1 as prerequisite. Does not catalyze N(3)-methylcytidine modification of tRNA(Thr). The sequence is that of tRNA N(3)-methylcytidine methyltransferase trm141 from Schizosaccharomyces pombe (strain 972 / ATCC 24843) (Fission yeast).